We begin with the raw amino-acid sequence, 297 residues long: Tumor necrosis factor receptor superfamily member 27 (297 aa).

At 1 to 138 the chain is on the extracellular side; that stretch reads MDCQENEYWD…TPTVPPQEAT (138 aa). TNFR-Cys repeat units follow at residues 2–41, 43–83, and 85–118; these read DCQE…DAYC, ACPP…NAVC, and DCLP…EVQC. 8 cysteine pairs are disulfide-bonded: Cys3-Cys15, Cys18-Cys31, Cys21-Cys41, Cys44-Cys58, Cys61-Cys75, Cys64-Cys83, Cys86-Cys104, and Cys107-Cys118. Asn74 carries an N-linked (GlcNAc...) asparagine glycan. Residues 139 to 159 traverse the membrane as a helical; Signal-anchor for type III membrane protein segment; sequence LVALVSSLLVVFTLAFLGLFF. Topologically, residues 160-297 are cytoplasmic; that stretch reads LYCKQFFNRH…LNVPFEVPSP (138 aa). Positions 272–281 are enriched in polar residues; it reads ETLGGNTVES. The interval 272-297 is disordered; that stretch reads ETLGGNTVESTGDRLELNVPFEVPSP.

Associates with TRAF1, TRAF3 and TRAF6.

Its subcellular location is the membrane. Its function is as follows. Receptor for EDA isoform A2, but not for EDA isoform A1. Mediates the activation of the NF-kappa-B and JNK pathways. Activation seems to be mediated by binding to TRAF3 and TRAF6. The chain is Tumor necrosis factor receptor superfamily member 27 (EDA2R) from Homo sapiens (Human).